A 266-amino-acid chain; its full sequence is Small ribosomal subunit protein uS2 (266 aa).

Positions 238-266 (EFASAPDAGKKGRQAQPKKGKRASDAAAE) are disordered. Residues 248-258 (KGRQAQPKKGK) are compositionally biased toward basic residues.

It belongs to the universal ribosomal protein uS2 family.

The chain is Small ribosomal subunit protein uS2 from Xylella fastidiosa (strain M12).